Here is a 433-residue protein sequence, read N- to C-terminus: Monodehydroascorbate reductase (433 aa).

Residues 13–16, Glu-40, Arg-47, Lys-52, Ile-95, and 146–147 each bind FAD; these read GGVS and RE. Residues 171–177, Glu-195, Arg-201, and Gly-260 contribute to the NAD(+) site; that span reads GGYIGLE. NADP(+) is bound at residue 173-177; that stretch reads YIGLE. Arg-201 and Gly-260 together coordinate NADP(+). Asp-297 contributes to the FAD binding site. 313 to 314 provides a ligand contact to NAD(+); sequence EH. 313–314 is a binding site for NADP(+); the sequence is EH. Val-315 lines the FAD pocket. Arg-319 provides a ligand contact to L-ascorbate. Position 348 (Tyr-348) interacts with FAD. NAD(+) is bound at residue Tyr-348. Tyr-348 is an NADP(+) binding site. Residue Arg-350 coordinates L-ascorbate.

It belongs to the FAD-dependent oxidoreductase family. FAD serves as cofactor. Expressed in leaves, and to a lesser degree in stems, roots and all stages of fruit.

It is found in the cytoplasm. It catalyses the reaction 2 monodehydro-L-ascorbate radical + NADH + H(+) = 2 L-ascorbate + NAD(+). Functionally, catalyzes the conversion of monodehydroascorbate to ascorbate, oxidizing NADH in the process. The sequence is that of Monodehydroascorbate reductase from Solanum lycopersicum (Tomato).